The sequence spans 429 residues: MKVLVIGNGGREHALAWKAAQSPLVETVFVAPGNAGTALEPTLQNVAIGVTDIPALLDFAQNEKVDLTIVGPEAPLVKGVVDTFRAAGMKIFGPTAGAAQLEGSKAFTKDFLARHNIPTAEYQNFTEVEPALAYLREKGAPIVIKADGLAAGKGVIVAMTLEEAEAAVHDMLAGNAFGDAGHRIVIEEFLDGEEASFIVMVDGEHVLPMATSQDHKRVGDKDTGPNTGGMGAYSPAPVVTDDVHQRTMERIIWPTVKGMASEGNTYTGFLYAGLMIDKQGNPKVIEFNCRFGDPETQPIMLRMKSDLVELCLAACEGKLDEKTSEWDERASLGVVMAAGGYPGDYRTGDVIHGLPLEEVEDGKVFHAGTKLADDEQVVTSGGRVLCVTALGHTVAEAQKRAYALMTDIHWDDCFCRKDIGWRAIEREQN.

The ATP-grasp domain occupies 109–316; the sequence is KDFLARHNIP…LVELCLAACE (208 aa). An ATP-binding site is contributed by 135–196; sequence LREKGAPIVI…EEFLDGEEAS (62 aa). The interval 212 to 237 is disordered; sequence SQDHKRVGDKDTGPNTGGMGAYSPAP. The span at 213 to 223 shows a compositional bias: basic and acidic residues; the sequence is QDHKRVGDKDT. Glu-286 and Asn-288 together coordinate Mg(2+).

This sequence belongs to the GARS family. Monomer. Requires Mg(2+) as cofactor. Mn(2+) serves as cofactor.

It catalyses the reaction 5-phospho-beta-D-ribosylamine + glycine + ATP = N(1)-(5-phospho-beta-D-ribosyl)glycinamide + ADP + phosphate + H(+). It participates in purine metabolism; IMP biosynthesis via de novo pathway; N(1)-(5-phospho-D-ribosyl)glycinamide from 5-phospho-alpha-D-ribose 1-diphosphate: step 2/2. This Escherichia coli O157:H7 protein is Phosphoribosylamine--glycine ligase.